The chain runs to 506 residues: Aldehyde dehydrogenase [NAD(P)+] 2 (506 aa).

The Proton acceptor role is filled by Glu-268. Cys-302 functions as the Nucleophile in the catalytic mechanism.

The protein belongs to the aldehyde dehydrogenase family.

It localises to the cytoplasm. The enzyme catalyses an aldehyde + NAD(+) + H2O = a carboxylate + NADH + 2 H(+). It catalyses the reaction 3-aminopropanal + NAD(+) + H2O = beta-alanine + NADH + 2 H(+). Its function is as follows. Cytoplasmic aldehyde dehydrogenase involved in ethanol oxidation. Involved in pantothenic acid production through the conversion of 3-aminopropanal to beta-alanine, an intermediate in pantothenic acid (vitamin B5) and coenzyme A (CoA) biosynthesis. This Saccharomyces cerevisiae (strain ATCC 204508 / S288c) (Baker's yeast) protein is Aldehyde dehydrogenase [NAD(P)+] 2 (ALD3).